We begin with the raw amino-acid sequence, 52 residues long: UPF0057 membrane protein YqaE (52 aa).

The next 2 helical transmembrane spans lie at 1 to 21 (MGFW…LLGK) and 23 to 43 (FGWA…PGLI).

The protein belongs to the UPF0057 (PMP3) family.

The protein localises to the cell membrane. In Escherichia coli O157:H7, this protein is UPF0057 membrane protein YqaE (yqaE).